A 467-amino-acid polypeptide reads, in one-letter code: NADH-quinone oxidoreductase subunit N 2 (467 aa).

The next 13 helical transmembrane spans lie at 1 to 21 (MSIF…ALFV), 31 to 51 (VASW…FALG), 66 to 86 (LSQF…GIAA), 99 to 119 (FMLL…VELI), 153 to 173 (ILFG…IIAA), 195 to 215 (AVIG…LFPF), 231 to 253 (AAYV…AAFV), 258 to 280 (EVTT…AALV), 287 to 307 (LLGF…AAGS), 315 to 335 (AFYS…VCAI), 357 to 377 (LAMI…TAGF), 394 to 414 (WLVI…LSMV), and 434 to 454 (LIFG…PAPL).

The protein belongs to the complex I subunit 2 family. NDH-1 is composed of 14 different subunits. Subunits NuoA, H, J, K, L, M, N constitute the membrane sector of the complex.

The protein resides in the cell inner membrane. The catalysed reaction is a quinone + NADH + 5 H(+)(in) = a quinol + NAD(+) + 4 H(+)(out). In terms of biological role, NDH-1 shuttles electrons from NADH, via FMN and iron-sulfur (Fe-S) centers, to quinones in the respiratory chain. The immediate electron acceptor for the enzyme in this species is believed to be ubiquinone. Couples the redox reaction to proton translocation (for every two electrons transferred, four hydrogen ions are translocated across the cytoplasmic membrane), and thus conserves the redox energy in a proton gradient. The sequence is that of NADH-quinone oxidoreductase subunit N 2 from Solidesulfovibrio magneticus (strain ATCC 700980 / DSM 13731 / RS-1) (Desulfovibrio magneticus).